The sequence spans 491 residues: Probable cytosol aminopeptidase (491 aa).

Mn(2+) contacts are provided by K264 and D269. Residue K276 is part of the active site. Mn(2+)-binding residues include D287, D346, and E348. The active site involves R350.

The protein belongs to the peptidase M17 family. Requires Mn(2+) as cofactor.

The protein resides in the cytoplasm. It catalyses the reaction Release of an N-terminal amino acid, Xaa-|-Yaa-, in which Xaa is preferably Leu, but may be other amino acids including Pro although not Arg or Lys, and Yaa may be Pro. Amino acid amides and methyl esters are also readily hydrolyzed, but rates on arylamides are exceedingly low.. It carries out the reaction Release of an N-terminal amino acid, preferentially leucine, but not glutamic or aspartic acids.. In terms of biological role, presumably involved in the processing and regular turnover of intracellular proteins. Catalyzes the removal of unsubstituted N-terminal amino acids from various peptides. The protein is Probable cytosol aminopeptidase of Xylella fastidiosa (strain 9a5c).